A 248-amino-acid polypeptide reads, in one-letter code: Ribonuclease PH (248 aa).

Phosphate contacts are provided by residues R86 and 124-126; that span reads GTR.

The protein belongs to the RNase PH family. In terms of assembly, homohexameric ring arranged as a trimer of dimers.

The enzyme catalyses tRNA(n+1) + phosphate = tRNA(n) + a ribonucleoside 5'-diphosphate. Its function is as follows. Phosphorolytic 3'-5' exoribonuclease that plays an important role in tRNA 3'-end maturation. Removes nucleotide residues following the 3'-CCA terminus of tRNAs; can also add nucleotides to the ends of RNA molecules by using nucleoside diphosphates as substrates, but this may not be physiologically important. Probably plays a role in initiation of 16S rRNA degradation (leading to ribosome degradation) during starvation. The polypeptide is Ribonuclease PH (Listeria welshimeri serovar 6b (strain ATCC 35897 / DSM 20650 / CCUG 15529 / CIP 8149 / NCTC 11857 / SLCC 5334 / V8)).